We begin with the raw amino-acid sequence, 303 residues long: MHGILPLWKPKGLTSHDCVMRCRRYFKTKKVGHTGTLDPEVEGVLPICIGQATKIVPFLTDTKKVYEATVQLGYSTETEDATGKIVETKEVSDFPTNKNLEEVLQTFIGRTKQIPPMYSAVKVNGKKLYEYARANESVERPVREIEIFELTLTSVDEKNHSFDIRIVCSKGTYIRTLCVDIGKALGYPAHMSLLTRTKTGAFSEKNTVTFDMIEEAVSNQSEERLLEPIINGLQHLEQIEVNEDMEKRILNGQKLSLQRNQPKQTDPFVFVREGNVLAIYQSHPTNEDQIKPVRVFAIEDKKV.

Catalysis depends on D38, which acts as the Nucleophile.

It belongs to the pseudouridine synthase TruB family. Type 1 subfamily.

The catalysed reaction is uridine(55) in tRNA = pseudouridine(55) in tRNA. Responsible for synthesis of pseudouridine from uracil-55 in the psi GC loop of transfer RNAs. The polypeptide is tRNA pseudouridine synthase B (Oceanobacillus iheyensis (strain DSM 14371 / CIP 107618 / JCM 11309 / KCTC 3954 / HTE831)).